A 152-amino-acid polypeptide reads, in one-letter code: Transcriptional repressor NrdR (152 aa).

A zinc finger lies at 3–34; it reads CPFCNHGELKVIDSRNSPEANAIKRRRECLRC. The ATP-cone domain maps to 48–138; the sequence is IQVLKRDGRY…VYRRFRDVGE (91 aa).

Belongs to the NrdR family. Requires Zn(2+) as cofactor.

Functionally, negatively regulates transcription of bacterial ribonucleotide reductase nrd genes and operons by binding to NrdR-boxes. The chain is Transcriptional repressor NrdR from Chlamydia muridarum (strain MoPn / Nigg).